A 51-amino-acid chain; its full sequence is Large ribosomal subunit protein eL39 (51 aa).

It belongs to the eukaryotic ribosomal protein eL39 family.

The protein is Large ribosomal subunit protein eL39 (RpL39) of Drosophila melanogaster (Fruit fly).